Reading from the N-terminus, the 115-residue chain is uncharacterized protein (115 aa).

This is an uncharacterized protein from Bacillus subtilis (strain 168).